The chain runs to 316 residues: Fe-S cluster assembly protein DRE2 (316 aa).

The N-terminal SAM-like domain stretch occupies residues 4–156 (SMPVATTVAA…KPQHVASTSV (153 aa)). Residues 157 to 202 (PLKSRQPGALLNRKKTDPAKKQALWALSSPSTPKIDPEALLTAEDK) form a linker region. [2Fe-2S] cluster contacts are provided by Cys209, Cys223, Cys226, and Cys228. A fe-S binding site A region spans residues 209-228 (CEPVRSSAPRRKKACKSCSC). 4 residues coordinate [4Fe-4S] cluster: Cys279, Cys282, Cys290, and Cys293. 2 short sequence motifs (cx2C motif) span residues 279–282 (CGSC) and 290–293 (CAGC). The segment at 279–293 (CGSCFLGDAFRCAGC) is fe-S binding site B.

The protein belongs to the anamorsin family. In terms of assembly, monomer. Interacts with TAH18. Interacts with MIA40. Requires [2Fe-2S] cluster as cofactor. It depends on [4Fe-4S] cluster as a cofactor.

The protein resides in the cytoplasm. It localises to the mitochondrion intermembrane space. In terms of biological role, component of the cytosolic iron-sulfur (Fe-S) protein assembly (CIA) machinery required for the maturation of extramitochondrial Fe-S proteins. Part of an electron transfer chain functioning in an early step of cytosolic Fe-S biogenesis, facilitating the de novo assembly of a [4Fe-4S] cluster on the scaffold complex CFD1-NBP35. Electrons are transferred to DRE2 from NADPH via the FAD- and FMN-containing protein TAH18. TAH18-DRE2 are also required for the assembly of the diferric tyrosyl radical cofactor of ribonucleotide reductase (RNR), probably by providing electrons for reduction during radical cofactor maturation in the catalytic small subunit RNR2. This Laccaria bicolor (strain S238N-H82 / ATCC MYA-4686) (Bicoloured deceiver) protein is Fe-S cluster assembly protein DRE2.